A 186-amino-acid polypeptide reads, in one-letter code: Ribosome-recycling factor (186 aa).

This sequence belongs to the RRF family.

It is found in the cytoplasm. In terms of biological role, responsible for the release of ribosomes from messenger RNA at the termination of protein biosynthesis. May increase the efficiency of translation by recycling ribosomes from one round of translation to another. This chain is Ribosome-recycling factor, found in Burkholderia mallei (strain NCTC 10247).